We begin with the raw amino-acid sequence, 536 residues long: MDSSEIEVVPLDSNSHQSPTESPTITDVFSASAYGDLHQLKHFVEHNGSSVSLPDDNGFYALQWAALNNSLHVAQYIIQHGGDVNSADNIQQTPLHWAAVKGSIDVADLLLQHGARIEAVDVNGFRAVHVASQYGQTAFVNHIIVDYAADYNALDIEGRSPLHWAAYNGFTETVRLLLFRDACQNRQDNTGCTPLHWAVIKENVEACTLLVHAGTKEELILKDNTGSTPLKLASDKGHRQLALFLSKAMRTRKNSFVDKIFCGKLGETSYAPMLFSLIVILMVLFITSIVSASNLPKITAMVGLWACFGLSCGVYALITFYRVSRKDPGYVKRTGEANSQHTANDPLIDINFKNPSWKGNWSQLCPTCKIIRPVRSKHCPTCKRCVEQFDHHCPWISNCVGKKNKRYFLVFVIMGALTSFVGGTTAVQRLWRGIPQVHHGESWIKHIVIEHPDAAVFLFFDLLIFIATMTLTISQSYMIARNITTNELWNAKRFSYLRGPDGRFYNPYNHGLRRNCTDFLVHGYTRDDEVVPSSIL.

Residues 1-23 are disordered; the sequence is MDSSEIEVVPLDSNSHQSPTESP. Residues 12-23 show a composition bias toward polar residues; it reads DSNSHQSPTESP. 6 ANK repeats span residues 57-86, 90-119, 123-153, 157-186, 190-219, and 225-254; these read NGFY…DVNS, IQQT…RIEA, NGFR…DYNA, EGRS…CQNR, TGCT…KEEL, and TGST…TRKN. 2 helical membrane passes run 270–290 and 298–318; these read YAPM…TSIV and ITAM…YALI. One can recognise a DHHC domain in the interval 363-413; it reads QLCPTCKIIRPVRSKHCPTCKRCVEQFDHHCPWISNCVGKKNKRYFLVFVI. Cys-393 (S-palmitoyl cysteine intermediate) is an active-site residue. 2 helical membrane-spanning segments follow: residues 407 to 427 and 454 to 474; these read YFLV…TTAV and AAVF…LTIS.

Belongs to the DHHC palmitoyltransferase family. As to expression, expressed in roots, shoots, flowers and pollen.

The protein resides in the golgi apparatus membrane. It carries out the reaction L-cysteinyl-[protein] + hexadecanoyl-CoA = S-hexadecanoyl-L-cysteinyl-[protein] + CoA. Functionally, palmitoyl acyltransferase. This Arabidopsis thaliana (Mouse-ear cress) protein is Probable protein S-acyltransferase 23 (PAT23).